We begin with the raw amino-acid sequence, 200 residues long: Nucleoside triphosphate pyrophosphatase (200 aa).

The active-site Proton acceptor is aspartate 79.

The protein belongs to the Maf family. A divalent metal cation serves as cofactor.

It is found in the cytoplasm. The enzyme catalyses a ribonucleoside 5'-triphosphate + H2O = a ribonucleoside 5'-phosphate + diphosphate + H(+). The catalysed reaction is a 2'-deoxyribonucleoside 5'-triphosphate + H2O = a 2'-deoxyribonucleoside 5'-phosphate + diphosphate + H(+). Its function is as follows. Nucleoside triphosphate pyrophosphatase. May have a dual role in cell division arrest and in preventing the incorporation of modified nucleotides into cellular nucleic acids. The protein is Nucleoside triphosphate pyrophosphatase of Legionella pneumophila (strain Corby).